The sequence spans 307 residues: DNA damage tolerance protein rad31 (307 aa).

Could be involved in a ubiquitin-related process important for DNA damage tolerance. Acts in a process which is defective in the checkpoint rad mutants and which involves hus5. This Schizosaccharomyces pombe (strain 972 / ATCC 24843) (Fission yeast) protein is DNA damage tolerance protein rad31 (rad31).